Reading from the N-terminus, the 600-residue chain is Molybdenum cofactor biosynthesis protein moc-5 (600 aa).

Residues R4–A371 are molybdenum cofactor biosynthesis protein A. The region spanning M68 to R284 is the Radical SAM core domain. Residue R77 coordinates GTP. The [4Fe-4S] cluster site is built by C84 and C88. S-adenosyl-L-methionine is bound at residue Y90. Residue C91 participates in [4Fe-4S] cluster binding. Residue R127 participates in GTP binding. G131 contributes to the S-adenosyl-L-methionine binding site. T158 is a binding site for GTP. S182 serves as a coordination point for S-adenosyl-L-methionine. K218 serves as a coordination point for GTP. M252 lines the S-adenosyl-L-methionine pocket. Residues C316 and C319 each contribute to the [4Fe-4S] cluster site. R321 to R323 contacts GTP. Residue C333 participates in [4Fe-4S] cluster binding. Residues R369–R390 are disordered. The segment at T396–D595 is molybdenum cofactor biosynthesis protein C. Catalysis depends on D566, which acts as the For molybdenum cofactor biosynthesis protein C activity.

It in the C-terminal section; belongs to the MoaC family. In the N-terminal section; belongs to the radical SAM superfamily. MoaA family. In terms of assembly, isoform a and isoform b probably form a heterooligomer. The cofactor is [4Fe-4S] cluster.

It catalyses the reaction GTP + AH2 + S-adenosyl-L-methionine = (8S)-3',8-cyclo-7,8-dihydroguanosine 5'-triphosphate + 5'-deoxyadenosine + L-methionine + A + H(+). The enzyme catalyses (8S)-3',8-cyclo-7,8-dihydroguanosine 5'-triphosphate = cyclic pyranopterin phosphate + diphosphate. Its pathway is cofactor biosynthesis; molybdopterin biosynthesis. In terms of biological role, probably forms a complex with isoform b that catalyzes the conversion of 5'-GTP to cyclic pyranopterin monophosphate (cPMP). Catalyzes the cyclization of GTP to (8S)-3',8-cyclo-7,8-dihydroguanosine 5'-triphosphate and mocs1b catalyzes the subsequent conversion of (8S)-3',8-cyclo-7,8-dihydroguanosine 5'-triphosphate to cPMP. Probably forms a complex with isoform a that catalyzes the conversion of 5'-GTP to cyclic pyranopterin monophosphate (cPMP). In Caenorhabditis elegans, this protein is Molybdenum cofactor biosynthesis protein moc-5.